The sequence spans 383 residues: 8-amino-7-oxononanoate synthase (383 aa).

Substrate is bound by residues arginine 27 and arginine 34. Residue 114–115 (GY) participates in pyridoxal 5'-phosphate binding. Position 139 (histidine 139) interacts with substrate. Pyridoxal 5'-phosphate contacts are provided by residues serine 187, 212–215 (DDAH), and 232–235 (TLSK). Position 235 is an N6-(pyridoxal phosphate)lysine (lysine 235). Threonine 344 contributes to the substrate binding site.

It belongs to the class-II pyridoxal-phosphate-dependent aminotransferase family. BioF subfamily. Homodimer. Pyridoxal 5'-phosphate serves as cofactor.

The enzyme catalyses 6-carboxyhexanoyl-[ACP] + L-alanine + H(+) = (8S)-8-amino-7-oxononanoate + holo-[ACP] + CO2. It functions in the pathway cofactor biosynthesis; biotin biosynthesis. Catalyzes the decarboxylative condensation of pimeloyl-[acyl-carrier protein] and L-alanine to produce 8-amino-7-oxononanoate (AON), [acyl-carrier protein], and carbon dioxide. In Methylorubrum extorquens (strain PA1) (Methylobacterium extorquens), this protein is 8-amino-7-oxononanoate synthase.